The following is a 324-amino-acid chain: NADH-cytochrome b5 reductase 1 (324 aa).

A helical membrane pass occupies residues 49-69; sequence LNIVLAFVVGLIGSVVVLLYF. Residues 81 to 184 enclose the FAD-binding FR-type domain; it reads TQWQQYRLME…KGPKGQMRYA (104 aa). Residues 164–179 and 190–222 each bind FAD; these read GSMK…GPKG and HIGM…QIDF.

The protein belongs to the flavoprotein pyridine nucleotide cytochrome reductase family. In terms of assembly, monomer. Component of the 2-(3-amino-3-carboxypropyl)histidine synthase complex composed of DPH1, DPH2, DPH3 and a NADH-dependent reductase, predominantly CBR1. Requires FAD as cofactor.

Its subcellular location is the mitochondrion outer membrane. The catalysed reaction is 2 Fe(III)-[cytochrome b5] + NADH = 2 Fe(II)-[cytochrome b5] + NAD(+) + H(+). It catalyses the reaction 2 Fe(3+)-[Dph3] + NADH = 2 Fe(2+)-[Dph3] + NAD(+) + H(+). The protein operates within protein modification; peptidyl-diphthamide biosynthesis. Its function is as follows. NADH-dependent reductase for DPH3 and cytochrome b5. Required for the first step of diphthamide biosynthesis, a post-translational modification of histidine which occurs in elongation factor 2. DPH1 and DPH2 transfer a 3-amino-3-carboxypropyl (ACP) group from S-adenosyl-L-methionine (SAM) to a histidine residue, the reaction is assisted by a reduction system comprising DPH3 and a NADH-dependent reductase, predominantly CBR1. By reducing DPH3, also involved in the formation of the tRNA wobble base modification mcm5s 2U (5-methoxycarbonylmethyl-2-thiouridine), mediated by the elongator complex. The cytochrome b5/NADH cytochrome b5 reductase electron transfer system supports the catalytic activity of several sterol biosynthetic enzymes. The polypeptide is NADH-cytochrome b5 reductase 1 (CBR1) (Mycosarcoma maydis (Corn smut fungus)).